The primary structure comprises 697 residues: Elongation factor G (697 aa).

Residues 10-285 (AKTRNIGIMA…GVIDYLPSPL (276 aa)) enclose the tr-type G domain. GTP-binding positions include 19–26 (AHIDAGKT), 83–87 (DTPGH), and 137–140 (NKMD).

Belongs to the TRAFAC class translation factor GTPase superfamily. Classic translation factor GTPase family. EF-G/EF-2 subfamily.

The protein localises to the cytoplasm. Catalyzes the GTP-dependent ribosomal translocation step during translation elongation. During this step, the ribosome changes from the pre-translocational (PRE) to the post-translocational (POST) state as the newly formed A-site-bound peptidyl-tRNA and P-site-bound deacylated tRNA move to the P and E sites, respectively. Catalyzes the coordinated movement of the two tRNA molecules, the mRNA and conformational changes in the ribosome. This Lactobacillus helveticus (strain DPC 4571) protein is Elongation factor G.